The following is a 220-amino-acid chain: MGSKLSKKKKGYNVNDEKAKDKDKKAEGAGTEEEGTQKESEPQAAADATEVKESAEEKPKDAADGEAKAEEKEADKAAAKEEAPKAEPEKSEGAAEEQPEPAPAPEQEAAAPGPAAGGEAPKAGEASAESTGAADGAPQEEGEAKKTEAPAAGPEAKSDAAPAASDSKPSTEPAPSSKETPAASEAPSSAAKAPAPAAPAAEPQAEAPVASSEQSVAVKE.

Over residues Met-1–Gly-11 the composition is skewed to basic residues. The disordered stretch occupies residues Met-1 to Glu-220. Residue Gly-2 is the site of N-myristoyl glycine attachment. The segment covering Asn-15–Glu-27 has biased composition (basic and acidic residues). Lys-25 is covalently cross-linked (Glycyl lysine isopeptide (Lys-Gly) (interchain with G-Cter in SUMO2)). Residues Thr-31 and Thr-36 each carry the phosphothreonine modification. Position 40 is a phosphoserine (Ser-40). Basic and acidic residues predominate over residues Thr-49–Gly-93. A Glycyl lysine isopeptide (Lys-Gly) (interchain with G-Cter in SUMO2) cross-link involves residue Lys-85. Residues Ser-91, Ser-127, and Ser-130 each carry the phosphoserine modification. Composition is skewed to low complexity over residues Pro-105 to Ala-137 and Ala-149 to Glu-213. Lys-157 participates in a covalent cross-link: Glycyl lysine isopeptide (Lys-Gly) (interchain with G-Cter in SUMO2). Residues Ser-158, Ser-165, Ser-167, Ser-170, Ser-189, and Ser-212 each carry the phosphoserine modification.

It belongs to the BASP1 family. Brain.

Its subcellular location is the cell membrane. The protein resides in the cell projection. The protein localises to the growth cone. This chain is Brain acid soluble protein 1 (Basp1), found in Rattus norvegicus (Rat).